Here is a 95-residue protein sequence, read N- to C-terminus: Large ribosomal subunit protein uL23 (95 aa).

Belongs to the universal ribosomal protein uL23 family. As to quaternary structure, part of the 50S ribosomal subunit. Contacts protein L29, and trigger factor when it is bound to the ribosome.

Its function is as follows. One of the early assembly proteins it binds 23S rRNA. One of the proteins that surrounds the polypeptide exit tunnel on the outside of the ribosome. Forms the main docking site for trigger factor binding to the ribosome. This Syntrophotalea carbinolica (strain DSM 2380 / NBRC 103641 / GraBd1) (Pelobacter carbinolicus) protein is Large ribosomal subunit protein uL23.